Consider the following 306-residue polypeptide: 4-hydroxybenzoate geranyltransferase 2 (306 aa).

8 helical membrane passes run 38 to 58, 61 to 81, 119 to 139, 153 to 173, 178 to 198, 229 to 249, 251 to 271, and 285 to 305; these read IGSW…ADLG, PKML…GCTI, LFIG…LAIV, ITYW…LLGS, GSVV…WTLV, IWIT…GFIV, IGLP…WQIF, and FVSN…GRLF.

The protein belongs to the UbiA prenyltransferase family. It depends on Mg(2+) as a cofactor. In terms of tissue distribution, expressed only in roots.

It is found in the endoplasmic reticulum membrane. It catalyses the reaction 4-hydroxybenzoate + (2E)-geranyl diphosphate = 3-geranyl-4-hydroxybenzoate + diphosphate. Prenyltransferase involved in the biosynthesis of shikonin, a naphthoquinone secondary metabolite. Could accept only geranyl diphosphate and not dimethylallyl diphosphate, farnesyl diphosphate, or geranylgeranyl diphosphate as substrate. The chain is 4-hydroxybenzoate geranyltransferase 2 (PGT-2) from Lithospermum erythrorhizon (Purple gromwell).